We begin with the raw amino-acid sequence, 3961 residues long: Hybrid PKS-NRPS synthetase phm1 (3961 aa).

In terms of domain architecture, Ketosynthase family 3 (KS3) spans 4–436 (SEPIAIIGSA…GTNAHAIVEA (433 aa)). Catalysis depends on for beta-ketoacyl synthase activity residues cysteine 178, histidine 317, and histidine 356. The interval 541 to 867 (VFTGQGAQWP…RSKNDILELS (327 aa)) is malonyl-CoA:ACP transacylase (MAT) domain. The segment at 933–1068 (HPILGKRCLE…GTVTVTLAEP (136 aa)) is N-terminal hotdog fold. A dehydratase (DH) domain region spans residues 933–1234 (HPILGKRCLE…LELVPFTAAR (302 aa)). The PKS/mFAS DH domain occupies 933–1236 (HPILGKRCLE…LVPFTAARPE (304 aa)). Histidine 966 serves as the catalytic Proton acceptor; for dehydratase activity. Positions 1083 to 1236 (MTEIEVDRFY…LVPFTAARPE (154 aa)) are C-terminal hotdog fold. Aspartate 1143 functions as the Proton donor; for dehydratase activity in the catalytic mechanism. The segment at 1376–1569 (FDFYDQGLGL…GFGGIDTSTP (194 aa)) is methyltransferase (MT) domain. Residues 2106 to 2277 (TYLLIGMSGQ…GVPGSAISIS (172 aa)) form a ketoreductase (KR) domain region. Positions 2386–2464 (QAATIIKDGF…ELLQEAMDRT (79 aa)) constitute a Carrier 1 domain. At serine 2424 the chain carries O-(pantetheine 4'-phosphoryl)serine. The tract at residues 2482–2527 (PVTNTATPPPEVQVTGSASDSSRSLTPDGLSTSRPSTPVRTPMTEI) is disordered. Over residues 2495–2520 (VTGSASDSSRSLTPDGLSTSRPSTPV) the composition is skewed to polar residues. The interval 2553–2993 (PMSYGQARFW…DLPRWAGADV (441 aa)) is condensation (C) domain. Residues 3019–3424 (QMIGTYASKP…DGALFVHGRI (406 aa)) are adenylation (A) (KR) domain. Residues 3542–3616 (ANMEGRVAAL…GMARHVRAAF (75 aa)) form the Carrier 2 domain. Serine 3576 is modified (O-(pantetheine 4'-phosphoryl)serine). The segment at 3725–3871 (ITDIVFHCAA…VRPVSDVATT (147 aa)) is reductase (RED) domain.

In the C-terminal section; belongs to the NRP synthetase family.

Its pathway is secondary metabolite biosynthesis. In terms of biological role, hybrid PKS-NRPS synthetase; part of the gene cluster that mediates the biosynthesis of the trans-fused decalin-containing tetramic acid phomasetin, the stereochemical opposite of the HIV-1 integrase inhibitor equisetin. The PKS module of phm1 together with the enoylreductase phm4 catalyze the formation of the polyketide unit which is then conjugated to L-serine by the condensation domain of the phm1 NRPS module. Activity of the Dieckmann cyclase domain (RED) of phm1 results in release of the Dieckmann product intermediate. The Diels-Alderase phm7 then uses the Dieckmann product of phm1 as substrate and catalyzes the Diels-Alder cycloaddition to form the decalin ring of N-desmethylphomasetin. N-desmethylphomasetin is further methylated to phomasetin by the methyltransferase phm5. This chain is Hybrid PKS-NRPS synthetase phm1, found in Pyrenochaetopsis sp.